Here is a 210-residue protein sequence, read N- to C-terminus: Ribosomal RNA large subunit methyltransferase E (210 aa).

Residues Gly60, Trp62, Asp85, Asp101, and Asp126 each contribute to the S-adenosyl-L-methionine site. The active-site Proton acceptor is Lys166. Residues 191 to 200 (KPKASRDKSS) show a composition bias toward basic and acidic residues. Residues 191-210 (KPKASRDKSSETFLVARDLK) are disordered.

It belongs to the class I-like SAM-binding methyltransferase superfamily. RNA methyltransferase RlmE family.

It is found in the cytoplasm. It carries out the reaction uridine(2552) in 23S rRNA + S-adenosyl-L-methionine = 2'-O-methyluridine(2552) in 23S rRNA + S-adenosyl-L-homocysteine + H(+). Its function is as follows. Specifically methylates the uridine in position 2552 of 23S rRNA at the 2'-O position of the ribose in the fully assembled 50S ribosomal subunit. The protein is Ribosomal RNA large subunit methyltransferase E of Bordetella bronchiseptica (strain ATCC BAA-588 / NCTC 13252 / RB50) (Alcaligenes bronchisepticus).